Here is a 224-residue protein sequence, read N- to C-terminus: Iron-sulfur cluster repair protein ScdA (224 aa).

This sequence belongs to the RIC family. ScdA subfamily. In terms of assembly, homodimer.

The protein localises to the cytoplasm. Its function is as follows. Di-iron-containing protein involved in the repair of iron-sulfur clusters damaged by oxidative and nitrosative stress conditions. The sequence is that of Iron-sulfur cluster repair protein ScdA from Staphylococcus epidermidis (strain ATCC 35984 / DSM 28319 / BCRC 17069 / CCUG 31568 / BM 3577 / RP62A).